The following is a 257-amino-acid chain: UPF0246 protein BPP3440 (257 aa).

Belongs to the UPF0246 family.

The sequence is that of UPF0246 protein BPP3440 from Bordetella parapertussis (strain 12822 / ATCC BAA-587 / NCTC 13253).